A 198-amino-acid chain; its full sequence is Iron-sulfur flavoprotein MJ0731 (198 aa).

[4Fe-4S] cluster-binding residues include C46, C49, C52, and C59.

It belongs to the SsuE family. Isf subfamily. In terms of assembly, homodimer. Requires FMN as cofactor. [4Fe-4S] cluster is required as a cofactor.

Functionally, redox-active protein probably involved in electron transport. The polypeptide is Iron-sulfur flavoprotein MJ0731 (Methanocaldococcus jannaschii (strain ATCC 43067 / DSM 2661 / JAL-1 / JCM 10045 / NBRC 100440) (Methanococcus jannaschii)).